A 462-amino-acid chain; its full sequence is Zinc finger CCCH domain-containing protein 34 (462 aa).

The span at 1–13 shows a compositional bias: basic and acidic residues; that stretch reads MERYGRPGEEGSR. The segment at 1–26 is disordered; the sequence is MERYGRPGEEGSRSDPSLEWTSHGGE. C3H1-type zinc fingers lie at residues 54-82, 100-128, and 148-176; these read RPDEPDCIYYLRTGVCGYGSRCRFNHPRD, RMGHPVCQHFMRTGTCKFGASCKYHHPRQ, and RPGEKECSYYLRTGQCKFGLTCRFNHPVP. Polar residues predominate over residues 288–303; that stretch reads TGTYQSVPSSNSTSKE. Residues 288–310 form a disordered region; that stretch reads TGTYQSVPSSNSTSKEFPQRPDQ. C3H1-type zinc fingers lie at residues 307 to 335 and 353 to 381; these read RPDQPECQYFMRTGDCKFGSSCRYHHPVD and RPGVAQCTHFAQHGICKFGPACKFDHSMS. Low complexity predominate over residues 405 to 418; it reads SSSLSGSSAPVSSS. Residues 405-462 form a disordered region; the sequence is SSSLSGSSAPVSSSNEPTKEAVTPAVSSMVSGLSRPEPAETSGDSASVSGSIEAKTSS. Positions 446–462 are enriched in polar residues; sequence SGDSASVSGSIEAKTSS.

It localises to the nucleus. In Arabidopsis thaliana (Mouse-ear cress), this protein is Zinc finger CCCH domain-containing protein 34.